The primary structure comprises 912 residues: Probable dipeptidyl-aminopeptidase B (912 aa).

Disordered regions lie at residues 1–30 and 48–68; these read MAAE…SNSL and NGST…DYSD. The Cytoplasmic portion of the chain corresponds to 1–92; the sequence is MAAEKGGSSD…GGKPVQKKVK (92 aa). 2 stretches are compositionally biased toward basic and acidic residues: residues 7–25 and 54–67; these read GSSD…EYRD and TGPD…RDYS. The helical; Signal-anchor for type II membrane protein transmembrane segment at 93–113 threads the bilayer; sequence IVLGFLLFLCLSGWSLAFVLF. The Vacuolar portion of the chain corresponds to 114–912; the sequence is LFGGHESSKT…RAATWVGMSI (799 aa). Asn-130, Asn-210, Asn-346, Asn-569, and Asn-656 each carry an N-linked (GlcNAc...) asparagine glycan. The Charge relay system role is filled by Ser-751. Asn-810 carries an N-linked (GlcNAc...) asparagine glycan. Catalysis depends on charge relay system residues Asp-828 and His-861. Residue Asn-897 is glycosylated (N-linked (GlcNAc...) asparagine).

The protein belongs to the peptidase S9B family.

It is found in the vacuole membrane. It carries out the reaction Release of an N-terminal dipeptide, Xaa-Yaa-|-Zaa-, from a polypeptide, preferentially when Yaa is Pro, provided Zaa is neither Pro nor hydroxyproline.. Functionally, type IV dipeptidyl-peptidase which removes N-terminal dipeptides sequentially from polypeptides having unsubstituted N-termini provided that the penultimate residue is proline. The chain is Probable dipeptidyl-aminopeptidase B (DAPB) from Paracoccidioides brasiliensis (strain Pb18).